A 100-amino-acid polypeptide reads, in one-letter code: Testis development-related protein 1 (100 aa).

Positions 73–100 are disordered; sequence GLGSLGGQDSSGSLVQRASCELESPYEL.

Expressed in the testis but not in any other non-reproductive tissues (at protein level). Mainly located in spermatogenic cells in seminiferous tubules of adult testis.

Its subcellular location is the cytoplasm. This chain is Testis development-related protein 1 (TDRG1), found in Homo sapiens (Human).